Here is a 281-residue protein sequence, read N- to C-terminus: MAAEHDSDSVEPPGSEALLDAVLRTLYDLGETEGETEQKRIRKKKAKKRDSETIEDVAVEPLPLPGSPVRGQKKSASSFFQKLREELQSAPAAPSEVPVTTAVSLSPPKNGSKLVEVVEFQSKSKKRKLKSDEDEPAKNKTKVVKKDVDIQEFNLEKARLEVHRFGITGYGKGKERVLERERAIMLGAKPPKNTYVNYKVLQKQIKEKKIAVEEEKRAARETDIFKKKKKKGRGQEDRRSKKSAPSILSSGQVGQVGKFRNGTLILSPTDIKKINSSRVAK.

Residues 29–141 are disordered; sequence LGETEGETEQ…DEDEPAKNKT (113 aa). Phosphoserine occurs at positions 67 and 75. N6-acetyllysine is present on lysine 172. The segment at 221–254 is disordered; it reads ETDIFKKKKKKGRGQEDRRSKKSAPSILSSGQVG. Serine 267 carries the post-translational modification Phosphoserine.

As to quaternary structure, part of the small subunit (SSU) processome, composed of more than 70 proteins and the RNA chaperone small nucleolar RNA (snoRNA) U3.

It is found in the chromosome. Its subcellular location is the nucleus. The protein localises to the nucleolus. Part of the small subunit (SSU) processome, first precursor of the small eukaryotic ribosomal subunit. During the assembly of the SSU processome in the nucleolus, many ribosome biogenesis factors, an RNA chaperone and ribosomal proteins associate with the nascent pre-rRNA and work in concert to generate RNA folding, modifications, rearrangements and cleavage as well as targeted degradation of pre-ribosomal RNA by the RNA exosome. Prevents helicase DHX37 to be recruited before post-A1 state. The chain is 40S small subunit processome assembly factor 1 from Mus musculus (Mouse).